The sequence spans 299 residues: ATP phosphoribosyltransferase (299 aa).

This sequence belongs to the ATP phosphoribosyltransferase family. Long subfamily. In terms of assembly, equilibrium between an active dimeric form, an inactive hexameric form and higher aggregates. Interconversion between the various forms is largely reversible and is influenced by the natural substrates and inhibitors of the enzyme. The cofactor is Mg(2+).

It is found in the cytoplasm. The enzyme catalyses 1-(5-phospho-beta-D-ribosyl)-ATP + diphosphate = 5-phospho-alpha-D-ribose 1-diphosphate + ATP. Its pathway is amino-acid biosynthesis; L-histidine biosynthesis; L-histidine from 5-phospho-alpha-D-ribose 1-diphosphate: step 1/9. Its activity is regulated as follows. Feedback inhibited by histidine. In terms of biological role, catalyzes the condensation of ATP and 5-phosphoribose 1-diphosphate to form N'-(5'-phosphoribosyl)-ATP (PR-ATP). Has a crucial role in the pathway because the rate of histidine biosynthesis seems to be controlled primarily by regulation of HisG enzymatic activity. The chain is ATP phosphoribosyltransferase from Shigella dysenteriae serotype 1 (strain Sd197).